A 218-amino-acid chain; its full sequence is Pyridoxine/pyridoxamine 5'-phosphate oxidase (218 aa).

Residues arginine 11 to tyrosine 14 and lysine 75 each bind substrate. FMN contacts are provided by residues arginine 70–lysine 75, tyrosine 85–threonine 86, lysine 92, and glutamine 114. Positions 132, 136, and 140 each coordinate substrate. FMN-binding positions include glutamine 149–serine 150 and tryptophan 195. Arginine 201–histidine 203 contacts substrate. Residue arginine 205 participates in FMN binding.

The protein belongs to the pyridoxamine 5'-phosphate oxidase family. In terms of assembly, homodimer. Requires FMN as cofactor.

It catalyses the reaction pyridoxamine 5'-phosphate + O2 + H2O = pyridoxal 5'-phosphate + H2O2 + NH4(+). The enzyme catalyses pyridoxine 5'-phosphate + O2 = pyridoxal 5'-phosphate + H2O2. It functions in the pathway cofactor metabolism; pyridoxal 5'-phosphate salvage; pyridoxal 5'-phosphate from pyridoxamine 5'-phosphate: step 1/1. The protein operates within cofactor metabolism; pyridoxal 5'-phosphate salvage; pyridoxal 5'-phosphate from pyridoxine 5'-phosphate: step 1/1. Its function is as follows. Catalyzes the oxidation of either pyridoxine 5'-phosphate (PNP) or pyridoxamine 5'-phosphate (PMP) into pyridoxal 5'-phosphate (PLP). The chain is Pyridoxine/pyridoxamine 5'-phosphate oxidase from Mycolicibacterium gilvum (strain PYR-GCK) (Mycobacterium gilvum (strain PYR-GCK)).